The sequence spans 497 residues: 4,4'-diaponeurosporene oxygenase (497 aa).

7–19 is a binding site for FAD; that stretch reads VIGGGLGGISAAI.

It belongs to the carotenoid/retinoid oxidoreductase family. CrtP subfamily. The cofactor is FAD.

The catalysed reaction is all-trans-4,4'-diaponeurosporene + 2 AH2 + 2 O2 = 4,4'-diaponeurosporenal + 2 A + 3 H2O. It functions in the pathway carotenoid biosynthesis; staphyloxanthin biosynthesis; staphyloxanthin from farnesyl diphosphate: step 3/5. Involved in the biosynthesis of the yellow-orange carotenoid staphyloxanthin, which plays a role in the virulence via its protective function against oxidative stress. Catalyzes the oxidation of the terminal methyl side group of 4,4'-diaponeurosporene to form 4,4'-diaponeurosporen-4-al. This is 4,4'-diaponeurosporene oxygenase from Staphylococcus aureus (strain MRSA252).